A 152-amino-acid polypeptide reads, in one-letter code: Regulator of G-protein signaling 21 (152 aa).

Residues 21 to 137 (NMDTLLANQA…LKSEIYKKLV (117 aa)) form the RGS domain.

In terms of tissue distribution, expressed ubiquitously.

Its function is as follows. Inhibits signal transduction by increasing the GTPase activity of G protein alpha subunits thereby driving them into their inactive GDP-bound form. The sequence is that of Regulator of G-protein signaling 21 (RGS21) from Homo sapiens (Human).